Here is a 1498-residue protein sequence, read N- to C-terminus: ATP-binding cassette sub-family C member 6 (1498 aa).

At 1–37 (MNRGRSMATPGEQCAGLRVWNQTEQEPAAYHLLSLCF) the chain is on the extracellular side. An N-linked (GlcNAc...) asparagine glycan is attached at Asn-21. A helical transmembrane segment spans residues 38–58 (VRAASSWVPPMYLWVLGPIYL). The Cytoplasmic segment spans residues 59 to 78 (LYIHRHGRCYLRMSHLFKTK). A helical transmembrane segment spans residues 79 to 99 (MVLGLALILLYTFNVAVPLWR). Topologically, residues 100-104 (IHQGV) are extracellular. A helical membrane pass occupies residues 105–125 (PQAPELLIHPTVWLTTMSFAT). Residues 126 to 137 (FLIHMERRKGVR) lie on the Cytoplasmic side of the membrane. Residues 138 to 155 (SSGVLFGYWLLCCILPGI) traverse the membrane as a helical segment. At 156–173 (NTVQQASAGNFRQEPLHH) the chain is on the extracellular side. Residues 174 to 194 (LATYLCLSLVVAELVLSCLVD) form a helical membrane-spanning segment. The Cytoplasmic segment spans residues 195-300 (QPPFFSEDSQ…RSQRGPLLRA (106 aa)). Residues 301-321 (IWRVFRSTFLLGTLSLVISDA) traverse the membrane as a helical segment. The 284-residue stretch at 309-592 (FLLGTLSLVI…LPFSVHCIVQ (284 aa)) folds into the ABC transmembrane type-1 1 domain. The Extracellular segment spans residues 322-347 (FRFAVPKLLSLFLEFMGDRNSSAWTG). The N-linked (GlcNAc...) asparagine glycan is linked to Asn-341. A helical transmembrane segment spans residues 348 to 368 (WLLAVLMFAAACLQTLFEQQH). The Cytoplasmic segment spans residues 369–424 (MYRAKVLQMRLRTAITGLVYRKVLVLSSGSRKSSAAGDVVNLVSVDIQRLAESIIY). A helical transmembrane segment spans residues 425 to 445 (LNGLWLLFLWIFVCFVYLWQL). At 446 to 448 (LGP) the chain is on the extracellular side. A helical transmembrane segment spans residues 449-469 (SALTAVAVFLSLLPLNFFITK). Residues 470–531 (KRGFHQEEQM…ALKTSTLLFS (62 aa)) are Cytoplasmic-facing. Residues 532–552 (VSLVSFQVSTFLVALVVFAVH) traverse the membrane as a helical segment. Residues 553–574 (TLVAEDNAMDAEKAFVTLTVLS) lie on the Extracellular side of the membrane. The chain crosses the membrane as a helical span at residues 575 to 595 (ILNKAQAFLPFSVHCIVQARV). Residues 596 to 934 (SFDRLAAFLC…VKTTIYLSYL (339 aa)) lie on the Cytoplasmic side of the membrane. An ABC transporter 1 domain is found at 627–851 (ISVHNGTFAW…NGALVGLLDG (225 aa)). 661 to 668 (GPVGAGKS) contributes to the ATP binding site. The interval 855-910 (PAGTHDAATSDDLGGFPGGGRPTCRPDRPRPTEAAPVKGRSTSEVQMEASLDDPEA) is disordered. The chain crosses the membrane as a helical span at residues 935-955 (RAVGTPLCTYTLFLFLCQQVA). The region spanning 942–1223 (CTYTLFLFLC…VVRSWTDLEN (282 aa)) is the ABC transmembrane type-1 2 domain. Over 956–992 (SFSQGYWLSLWADDPVVDGRQMHAALRGWVFGLLGCL) the chain is Extracellular. Residues 993 to 1013 (QAIGLFASMAAVFLGGARASG) traverse the membrane as a helical segment. Over 1014 to 1056 (LLFRSLLWDVARSPIGFFERTPVGNLLNRFSKETDTVDVDIPD) the chain is Cytoplasmic. A helical membrane pass occupies residues 1057–1077 (KLRSLLTYAFGLLEVGLAVTM). A topological domain (extracellular) is located at residue Ala-1078. The chain crosses the membrane as a helical span at residues 1079 to 1099 (TPLAIVAILPLMVLYAGFQSL). At 1100–1170 (YVATSCQLRR…VADRWLATNL (71 aa)) the chain is on the cytoplasmic side. A helical transmembrane segment spans residues 1171–1191 (ELLGNGLVFVAATCAVLSKAH). Residues 1192–1193 (LS) are Extracellular-facing. The chain crosses the membrane as a helical span at residues 1194 to 1214 (AGLVGFSVSAALQVTQTLQWV). Topologically, residues 1215 to 1498 (VRSWTDLENS…YRLAHESGLA (284 aa)) are cytoplasmic. An ABC transporter 2 domain is found at 1260–1494 (IEFRDFGLRH…KGLFYRLAHE (235 aa)). Ser-1281 carries the phosphoserine modification. ATP is bound at residue 1294 to 1301 (GRTGAGKS).

It belongs to the ABC transporter superfamily. ABCC family. Conjugate transporter (TC 3.A.1.208) subfamily. Post-translationally, glycosylated.

It localises to the basolateral cell membrane. Its subcellular location is the basal cell membrane. The catalysed reaction is an S-substituted glutathione(in) + ATP + H2O = an S-substituted glutathione(out) + ADP + phosphate + H(+). It carries out the reaction leukotriene C4(in) + ATP + H2O = leukotriene C4(out) + ADP + phosphate + H(+). Functionally, ATP-dependent transporter of the ATP-binding cassette (ABC) family that actively extrudes physiological compounds, and xenobiotics from cells. Mediates ATP-dependent transport of glutathione conjugates such as leukotriene-c4 (LTC4) and N-ethylmaleimide S-glutathione (NEM-GS) (in vitro), and an anionic cyclopentapeptide endothelin antagonist, BQ-123. May contribute to regulate the transport of organic compounds in testes across the blood-testis-barrier. Mediates the release of nucleoside triphosphates, predominantly ATP, into the circulation, where it is rapidly converted into AMP and the mineralization inhibitor inorganic pyrophosphate (PPi) by the ecto-enzyme ectonucleotide pyrophosphatase phosphodiesterase 1 (ENPP1), therefore playing a role in PPi homeostasis. This chain is ATP-binding cassette sub-family C member 6 (Abcc6), found in Mus musculus (Mouse).